The following is a 401-amino-acid chain: 1-deoxy-D-xylulose 5-phosphate reductoisomerase (401 aa).

NADPH contacts are provided by T10, G11, S12, I13, N38, and N124. K125 contacts 1-deoxy-D-xylulose 5-phosphate. NADPH is bound at residue E126. D150 contacts Mn(2+). Residues S151, E152, S186, and H209 each contribute to the 1-deoxy-D-xylulose 5-phosphate site. Residue E152 participates in Mn(2+) binding. Position 215 (G215) interacts with NADPH. The 1-deoxy-D-xylulose 5-phosphate site is built by S222, N227, K228, and E231. A Mn(2+)-binding site is contributed by E231.

Belongs to the DXR family. Mg(2+) serves as cofactor. Mn(2+) is required as a cofactor.

It catalyses the reaction 2-C-methyl-D-erythritol 4-phosphate + NADP(+) = 1-deoxy-D-xylulose 5-phosphate + NADPH + H(+). The protein operates within isoprenoid biosynthesis; isopentenyl diphosphate biosynthesis via DXP pathway; isopentenyl diphosphate from 1-deoxy-D-xylulose 5-phosphate: step 1/6. Functionally, catalyzes the NADPH-dependent rearrangement and reduction of 1-deoxy-D-xylulose-5-phosphate (DXP) to 2-C-methyl-D-erythritol 4-phosphate (MEP). The chain is 1-deoxy-D-xylulose 5-phosphate reductoisomerase from Vibrio campbellii (strain ATCC BAA-1116).